The sequence spans 344 residues: Endoplasmic reticulum junction formation protein lunapark-1 (344 aa).

Residues 1 to 39 lie on the Cytoplasmic side of the membrane; it reads MGNLFSRTKSPATELERVVLSIEDFKKRLQTISASNSST. The chain crosses the membrane as a helical span at residues 40–60; the sequence is LYYYYMGVIIILSIAMAHTWL. Residues 61-68 are Lumenal-facing; that stretch reads RFDDPTKT. Residues 69 to 89 traverse the membrane as a helical segment; sequence YVACALVFGATVIVLTGRYII. The Cytoplasmic portion of the chain corresponds to 90–344; sequence NCFFAWRTNR…ADETAVVEKS (255 aa). The stretch at 116 to 140 forms a coiled coil; the sequence is DLVKETLKFKEAKEILDRYEEKTEA. 2 disordered regions span residues 136–155 and 171–192; these read EKTE…HQQK and QKRV…IAFD. Positions 140 to 155 are enriched in polar residues; it reads AGNTPTENSKLIHQQK. The C4-type; plays a role in ER morphology zinc-finger motif lies at 239 to 264; sequence CSICHTHNGMSVPAEYPFISFRCFEC. The interval 275–344 is disordered; the sequence is PHLPITRPPM…ADETAVVEKS (70 aa). The segment covering 312-326 has biased composition (polar residues); the sequence is PNPSTDLTPSASQHG. Positions 327–344 are enriched in basic and acidic residues; the sequence is SDSEPEKNADETAVVEKS.

It belongs to the lunapark family.

The protein resides in the endoplasmic reticulum membrane. Functionally, plays a role in tubular endoplasmic reticulum network formation and maintenance. May be involved in central nervous system development. Has a presynaptic role in neurotransmission. Likely to operate in synaptogenesis by regulating vesicular transport or localization. Required for correct localization of rab-3 and snb-1. This is Endoplasmic reticulum junction formation protein lunapark-1 from Caenorhabditis briggsae.